A 290-amino-acid chain; its full sequence is Bifunctional protein FolD (290 aa).

NADP(+) is bound by residues 166-168 (GQS), serine 191, and isoleucine 232.

Belongs to the tetrahydrofolate dehydrogenase/cyclohydrolase family. Homodimer.

The catalysed reaction is (6R)-5,10-methylene-5,6,7,8-tetrahydrofolate + NADP(+) = (6R)-5,10-methenyltetrahydrofolate + NADPH. It catalyses the reaction (6R)-5,10-methenyltetrahydrofolate + H2O = (6R)-10-formyltetrahydrofolate + H(+). It functions in the pathway one-carbon metabolism; tetrahydrofolate interconversion. In terms of biological role, catalyzes the oxidation of 5,10-methylenetetrahydrofolate to 5,10-methenyltetrahydrofolate and then the hydrolysis of 5,10-methenyltetrahydrofolate to 10-formyltetrahydrofolate. The polypeptide is Bifunctional protein FolD (Halorhodospira halophila (strain DSM 244 / SL1) (Ectothiorhodospira halophila (strain DSM 244 / SL1))).